Consider the following 363-residue polypeptide: Membrane-bound lytic murein transglycosylase C (363 aa).

The first 15 residues, 1–15 (MKKYIVFAIIPFLFA), serve as a signal peptide directing secretion. Residue cysteine 16 is the site of N-palmitoyl cysteine attachment. A lipid anchor (S-diacylglycerol cysteine) is attached at cysteine 16.

This sequence belongs to the transglycosylase Slt family.

It is found in the cell outer membrane. It catalyses the reaction Exolytic cleavage of the (1-&gt;4)-beta-glycosidic linkage between N-acetylmuramic acid (MurNAc) and N-acetylglucosamine (GlcNAc) residues in peptidoglycan, from either the reducing or the non-reducing ends of the peptidoglycan chains, with concomitant formation of a 1,6-anhydrobond in the MurNAc residue.. In terms of biological role, murein-degrading enzyme. May play a role in recycling of muropeptides during cell elongation and/or cell division. The chain is Membrane-bound lytic murein transglycosylase C from Histophilus somni (strain 129Pt) (Haemophilus somnus).